The following is a 513-amino-acid chain: Ribonuclease Y (513 aa).

Residues 4 to 24 traverse the membrane as a helical segment; the sequence is NTAIIIAITTGFVAFIGGYFL. The KH domain maps to 203 to 266; sequence TVAVIPLPNE…ETARMALEKL (64 aa). Residues 329–422 form the HD domain; sequence VLKHSVEVAY…IQAADAISAA (94 aa).

This sequence belongs to the RNase Y family.

It localises to the cell membrane. In terms of biological role, endoribonuclease that initiates mRNA decay. This chain is Ribonuclease Y, found in Desulforudis audaxviator (strain MP104C).